A 212-amino-acid polypeptide reads, in one-letter code: 3-isopropylmalate dehydratase small subunit (212 aa).

Belongs to the LeuD family. LeuD type 1 subfamily. Heterodimer of LeuC and LeuD.

It carries out the reaction (2R,3S)-3-isopropylmalate = (2S)-2-isopropylmalate. It participates in amino-acid biosynthesis; L-leucine biosynthesis; L-leucine from 3-methyl-2-oxobutanoate: step 2/4. Catalyzes the isomerization between 2-isopropylmalate and 3-isopropylmalate, via the formation of 2-isopropylmaleate. This chain is 3-isopropylmalate dehydratase small subunit, found in Thiobacillus denitrificans (strain ATCC 25259 / T1).